The chain runs to 588 residues: Adenine deaminase (588 aa).

The protein belongs to the metallo-dependent hydrolases superfamily. Adenine deaminase family. In terms of assembly, homodimer. Mn(2+) is required as a cofactor.

It catalyses the reaction adenine + H2O + H(+) = hypoxanthine + NH4(+). The protein is Adenine deaminase of Escherichia coli O157:H7 (strain EC4115 / EHEC).